We begin with the raw amino-acid sequence, 346 residues long: Phosphoribosylformylglycinamidine cyclo-ligase (346 aa).

It belongs to the AIR synthase family.

Its subcellular location is the cytoplasm. The enzyme catalyses 2-formamido-N(1)-(5-O-phospho-beta-D-ribosyl)acetamidine + ATP = 5-amino-1-(5-phospho-beta-D-ribosyl)imidazole + ADP + phosphate + H(+). The protein operates within purine metabolism; IMP biosynthesis via de novo pathway; 5-amino-1-(5-phospho-D-ribosyl)imidazole from N(2)-formyl-N(1)-(5-phospho-D-ribosyl)glycinamide: step 2/2. In Colwellia psychrerythraea (strain 34H / ATCC BAA-681) (Vibrio psychroerythus), this protein is Phosphoribosylformylglycinamidine cyclo-ligase.